Reading from the N-terminus, the 398-residue chain is Succinate--CoA ligase [ADP-forming] subunit beta (398 aa).

An ATP-grasp domain is found at 9-254; that stretch reads KAVLREFGVP…ETEEDAKEIE (246 aa). Residues K46, 53-55, E109, S112, and E117 each bind ATP; that span reads GRG. The Mg(2+) site is built by N209 and D223. Residues N274 and 331–333 each bind substrate; that span reads GIM.

The protein belongs to the succinate/malate CoA ligase beta subunit family. As to quaternary structure, heterotetramer of two alpha and two beta subunits. The cofactor is Mg(2+).

The catalysed reaction is succinate + ATP + CoA = succinyl-CoA + ADP + phosphate. It catalyses the reaction GTP + succinate + CoA = succinyl-CoA + GDP + phosphate. Its pathway is carbohydrate metabolism; tricarboxylic acid cycle; succinate from succinyl-CoA (ligase route): step 1/1. Its function is as follows. Succinyl-CoA synthetase functions in the citric acid cycle (TCA), coupling the hydrolysis of succinyl-CoA to the synthesis of either ATP or GTP and thus represents the only step of substrate-level phosphorylation in the TCA. The beta subunit provides nucleotide specificity of the enzyme and binds the substrate succinate, while the binding sites for coenzyme A and phosphate are found in the alpha subunit. The polypeptide is Succinate--CoA ligase [ADP-forming] subunit beta (Rhodopseudomonas palustris (strain ATCC BAA-98 / CGA009)).